The chain runs to 582 residues: WD repeat-containing protein JIP5 (582 aa).

5 WD repeats span residues 27 to 68 (KYPE…EAQS), 125 to 168 (RHKG…VLSK), 177 to 216 (DKND…SNQL), 265 to 310 (DQED…LMDQ), and 373 to 410 (GPAD…LNSD). Disordered regions lie at residues 405–496 (ETLN…DTEL) and 531–582 (TKEQ…FDDL). Acidic residues-rich tracts occupy residues 410-438 (DSDD…DDDV) and 447-485 (EVND…ENVT). Basic and acidic residues-rich tracts occupy residues 531–540 (TKEQSTKKAD) and 570–582 (QKHE…FDDL).

It belongs to the WD repeat WDR55 family.

Its subcellular location is the nucleus. It localises to the nucleolus. This is WD repeat-containing protein JIP5 (JIP5) from Debaryomyces hansenii (strain ATCC 36239 / CBS 767 / BCRC 21394 / JCM 1990 / NBRC 0083 / IGC 2968) (Yeast).